Reading from the N-terminus, the 373-residue chain is WAT1-related protein At4g08300 (373 aa).

Helical transmembrane passes span 11–31 (PIIA…ITMV), 41–61 (ILAT…ALIL), 67–87 (PKMT…EPLL), 102–122 (TYSS…AVIF), 139–159 (IGTA…GPAI), 185–205 (WVTG…FFIL), 219–239 (LVMW…LIMV), 255–275 (AAVY…SIVI), 281–301 (VFTT…GVLV), and 306–326 (IHLG…SVVW). 2 EamA domains span residues 23–151 (AGMY…AMVM) and 198–325 (TWAG…YSVV).

It belongs to the drug/metabolite transporter (DMT) superfamily. Plant drug/metabolite exporter (P-DME) (TC 2.A.7.4) family.

The protein resides in the membrane. The polypeptide is WAT1-related protein At4g08300 (Arabidopsis thaliana (Mouse-ear cress)).